The sequence spans 308 residues: Coenzyme PQQ synthesis protein B (308 aa).

This sequence belongs to the PqqB family.

Its pathway is cofactor biosynthesis; pyrroloquinoline quinone biosynthesis. May be involved in the transport of PQQ or its precursor to the periplasm. This is Coenzyme PQQ synthesis protein B from Rhodopseudomonas palustris (strain TIE-1).